A 621-amino-acid polypeptide reads, in one-letter code: MIQPLLVAICLVVFPYQGSSTILESGKVRDYEVVYPQKIPSLPKGRLQRREEKTKYENTMKYEFKVNGEPVVLNLEKNKRLFSKDYTETHYSPDGREITTSPPVQDHCYYHGHIQNDADSTAVIRACDGLNGYFKSNGEMYIIEPLKLSDSEAHAVFKYESLEKEDETPKTCGAIHNSGESDETIKKISNTFVTPEKGEEYLEAEKHIELYMVADNLVYRKYSSNITVVRMRIFEILNYVNLYYKILNIHVVLIGLEVWSDEDKILINGSSELTVRSFAAWRHSDLLKHKRNDNAQLLTGIHFDKRVLGIAFIGGMCNNFTSVGAIQDNSIHAVLIAATMTHELGHNLGMNHDTDSCTCNTGPCIMKAALNFKPPYEFSSCSYWDFQNYIMTKSAQCILNDPLTTDIVPTAICGNGFVEEGEECDCGPPEICKNECCEAATCKLKPEAQCASGACCEECQFRRAGELCRAAKDDCDLDELCTGQSAECPMNHFHMNGHPCQNNQGYCFRGTCPTLTKQCIALWGPDAEVAPDGCFMNNQKGNYYGYCKKKNGTNIPCEPENVKCGRLYCIDDSTEENSCKFHFSNENANSGMVQPGTKCGEGMVCGFGECIGLETALGINQ.

The N-terminal stretch at 1–20 (MIQPLLVAICLVVFPYQGSS) is a signal peptide. Residues 21 to 188 (TILESGKVRD…GESDETIKKI (168 aa)) constitute a propeptide that is removed on maturation. The region spanning 206 to 402 (KHIELYMVAD…KSAQCILNDP (197 aa)) is the Peptidase M12B domain. Residues Asn-225, Asn-268, and Asn-319 are each glycosylated (N-linked (GlcNAc...) asparagine). Intrachain disulfides connect Cys-317–Cys-397, Cys-357–Cys-381, Cys-359–Cys-364, Cys-413–Cys-442, Cys-424–Cys-437, Cys-426–Cys-432, Cys-436–Cys-459, Cys-450–Cys-456, Cys-455–Cys-481, Cys-468–Cys-488, Cys-475–Cys-507, Cys-500–Cys-512, Cys-519–Cys-569, Cys-534–Cys-579, Cys-547–Cys-557, Cys-564–Cys-605, and Cys-599–Cys-610. His-342 is a binding site for Zn(2+). Residue Glu-343 is part of the active site. Zn(2+) contacts are provided by His-346 and His-352. The Disintegrin domain maps to 410–496 (TAICGNGFVE…ECPMNHFHMN (87 aa)). A D/ECD-tripeptide motif is present at residues 474–476 (DCD). Asn-551 carries N-linked (GlcNAc...) asparagine glycosylation.

The protein belongs to the venom metalloproteinase (M12B) family. P-III subfamily. P-IIIa sub-subfamily. In terms of assembly, monomer. The cofactor is Zn(2+). As to expression, expressed by the venom gland.

It is found in the secreted. In terms of biological role, snake venom zinc metalloproteinase that inhibits platelet aggregation and degrades fibrinogen. This Naja atra (Chinese cobra) protein is Zinc metalloproteinase-disintegrin-like NaMP.